The sequence spans 182 residues: MELGELLYNKSEYIETASGNKVSRQSVLCGSQNIVLNGKTIVMNDCIIRGDLANVRVGRHCVVKSRSVIRPPFKKFSKGVAFFPLHIGDHVFIEEDCVVNAAQIGSYVHVGKNCVIGRRCVLKDCCKILDNTVLPPETVVPPFTVFSGCPGLFSGELPECTQELMIDVTKSYYQKFLPLTQV.

At Met1 the chain carries N-acetylmethionine.

The protein belongs to the dynactin subunits 5/6 family. Dynactin subunit 5 subfamily. As to quaternary structure, subunit of dynactin, a multiprotein complex part of a tripartite complex with dynein and a adapter, such as BICDL1, BICD2 or HOOK3. The dynactin complex is built around ACTR1A/ACTB filament and consists of an actin-related filament composed of a shoulder domain, a pointed end and a barbed end. Its length is defined by its flexible shoulder domain. The soulder is composed of 2 DCTN1 subunits, 4 DCTN2 and 2 DCTN3. The 4 DCNT2 (via N-terminus) bind the ACTR1A filament and act as molecular rulers to determine the length. The pointed end is important for binding dynein-dynactin cargo adapters. Consists of 4 subunits: ACTR10, DCNT4, DCTN5 and DCTN6. Within the complex DCTN6 forms a heterodimer with DCTN5. The barbed end is composed of a CAPZA1:CAPZB heterodimers, which binds ACTR1A/ACTB filament and dynactin and stabilizes dynactin. Interacts with N4BP2L1.

The protein resides in the cytoplasm. It is found in the cytoskeleton. It localises to the chromosome. The protein localises to the centromere. Its subcellular location is the kinetochore. In terms of biological role, part of the dynactin complex that activates the molecular motor dynein for ultra-processive transport along microtubules. This chain is Dynactin subunit 5, found in Homo sapiens (Human).